We begin with the raw amino-acid sequence, 375 residues long: Succinyl-diaminopimelate desuccinylase (375 aa).

Histidine 66 provides a ligand contact to Zn(2+). Residue aspartate 68 is part of the active site. A Zn(2+)-binding site is contributed by aspartate 99. Glutamate 133 acts as the Proton acceptor in catalysis. The Zn(2+) site is built by glutamate 134, glutamate 162, and histidine 348.

It belongs to the peptidase M20A family. DapE subfamily. In terms of assembly, homodimer. It depends on Zn(2+) as a cofactor. Co(2+) serves as cofactor.

It carries out the reaction N-succinyl-(2S,6S)-2,6-diaminopimelate + H2O = (2S,6S)-2,6-diaminopimelate + succinate. Its pathway is amino-acid biosynthesis; L-lysine biosynthesis via DAP pathway; LL-2,6-diaminopimelate from (S)-tetrahydrodipicolinate (succinylase route): step 3/3. Catalyzes the hydrolysis of N-succinyl-L,L-diaminopimelic acid (SDAP), forming succinate and LL-2,6-diaminopimelate (DAP), an intermediate involved in the bacterial biosynthesis of lysine and meso-diaminopimelic acid, an essential component of bacterial cell walls. In Aeromonas hydrophila subsp. hydrophila (strain ATCC 7966 / DSM 30187 / BCRC 13018 / CCUG 14551 / JCM 1027 / KCTC 2358 / NCIMB 9240 / NCTC 8049), this protein is Succinyl-diaminopimelate desuccinylase.